The following is a 95-amino-acid chain: RING finger protein Z (95 aa).

A lipid anchor (N-myristoyl glycine; by host) is attached at Gly2. An RING-type; atypical zinc finger spans residues 38–74 (CKRCWFATKGLIACSDHYLCLNCLTIMLSDGNFCEVC). Positions 88–91 (PSAP) match the PTAP/PSAP motif motif.

It belongs to the arenaviridae Z protein family. In terms of assembly, interacts with protein NP; this interaction probably directs the encapsidated genome to budding sites. Interacts (via RING domain) with polymerase L; this interaction inhibits viral transcription and replication, Z partially blocks the product exit tunnel for the releasing nascent RNA product. Interacts with the glycoprotein complex; this interaction plays a role in virion budding. Interacts with host eIF4E; this interaction results in eIF4E reduced affinity for its substrate, the 5'-m7 G cap structure. Interacts (via late-budding domain) with host TSG101; this interaction is essential for budding and release of viral particles. Interacts with host RPLP0; this interaction may serve to load ribosome-like particles inside the virion. Interacts with host PML; this interaction induces PML bodies redistribution in the cytoplasm upon viral infection. Post-translationally, myristoylation is required for the role of RING finger protein Z in assembly and budding.

It localises to the virion. The protein resides in the host cytoplasm. Its subcellular location is the host perinuclear region. The protein localises to the host cell membrane. Its function is as follows. Plays a crucial role in virion assembly and budding. Expressed late in the virus life cycle, it acts as an inhibitor of viral transcription and RNA synthesis by interacting with the viral polymerase L. Presumably recruits the NP encapsidated genome to cellular membranes at budding sites via direct interaction with NP. Plays critical roles in the final steps of viral release by interacting with host TSG101, a member of the vacuolar protein-sorting pathway and using other cellular host proteins involved in vesicle formation pathway. The budding of the virus progeny occurs after association of protein Z with the viral glycoprotein complex SSP-GP1-GP2 at the cell periphery, step that requires myristoylation of protein Z. Also selectively represses protein production by associating with host eIF4E. In cell-based minigenome assay, has an inhibitory effect on the ribonucleoprotein machinery (vRNP), which is responsible for the replication and transcription of the viral genome. The polypeptide is RING finger protein Z (Sooretamys angouya (Paraguayan rice rat)).